A 571-amino-acid polypeptide reads, in one-letter code: Proline--tRNA ligase (571 aa).

The protein belongs to the class-II aminoacyl-tRNA synthetase family. ProS type 1 subfamily. In terms of assembly, homodimer.

Its subcellular location is the cytoplasm. The catalysed reaction is tRNA(Pro) + L-proline + ATP = L-prolyl-tRNA(Pro) + AMP + diphosphate. In terms of biological role, catalyzes the attachment of proline to tRNA(Pro) in a two-step reaction: proline is first activated by ATP to form Pro-AMP and then transferred to the acceptor end of tRNA(Pro). As ProRS can inadvertently accommodate and process non-cognate amino acids such as alanine and cysteine, to avoid such errors it has two additional distinct editing activities against alanine. One activity is designated as 'pretransfer' editing and involves the tRNA(Pro)-independent hydrolysis of activated Ala-AMP. The other activity is designated 'posttransfer' editing and involves deacylation of mischarged Ala-tRNA(Pro). The misacylated Cys-tRNA(Pro) is not edited by ProRS. This chain is Proline--tRNA ligase, found in Actinobacillus pleuropneumoniae serotype 7 (strain AP76).